The primary structure comprises 299 residues: 4-diphosphocytidyl-2-C-methyl-D-erythritol kinase (299 aa).

Residue K11 is part of the active site. 94–104 (PQGGGLGGGSS) lines the ATP pocket. D136 is an active-site residue.

This sequence belongs to the GHMP kinase family. IspE subfamily.

It carries out the reaction 4-CDP-2-C-methyl-D-erythritol + ATP = 4-CDP-2-C-methyl-D-erythritol 2-phosphate + ADP + H(+). Its pathway is isoprenoid biosynthesis; isopentenyl diphosphate biosynthesis via DXP pathway; isopentenyl diphosphate from 1-deoxy-D-xylulose 5-phosphate: step 3/6. Functionally, catalyzes the phosphorylation of the position 2 hydroxy group of 4-diphosphocytidyl-2C-methyl-D-erythritol. The polypeptide is 4-diphosphocytidyl-2-C-methyl-D-erythritol kinase (Bordetella parapertussis (strain 12822 / ATCC BAA-587 / NCTC 13253)).